The sequence spans 345 residues: Selenide, water dikinase (345 aa).

The active site involves Cys-16. ATP is bound by residues Lys-19 and 46–48 (TSD). Mg(2+) is bound at residue Asp-49. Residues Asp-66, Asp-89, and 136–138 (GHT) contribute to the ATP site. A Mg(2+)-binding site is contributed by Asp-89. Asp-224 contacts Mg(2+).

It belongs to the selenophosphate synthase 1 family. Class I subfamily. As to quaternary structure, homodimer. The cofactor is Mg(2+).

It carries out the reaction hydrogenselenide + ATP + H2O = selenophosphate + AMP + phosphate + 2 H(+). In terms of biological role, synthesizes selenophosphate from selenide and ATP. The sequence is that of Selenide, water dikinase from Clostridium botulinum (strain Alaska E43 / Type E3).